Consider the following 252-residue polypeptide: Floral homeotic protein AGAMOUS (252 aa).

The interval M1–G20 is disordered. Residues R19–Y73 form the MADS-box domain. The stretch at A99–I166 forms a coiled coil. The region spanning A103 to N193 is the K-box domain.

As to quaternary structure, homodimer, capable of binding to CArG-box sequences. Forms a heterodimer via the K-box domain with either SEPALATTA1/AGL2, SEPALATTA2/AGL4, SEPALLATA3/AGL9 or AGL6. Heterodimerization also seen with some other Agamous-like MADS-box proteins. Interacts with AGL15 and AGL16. Component of a complex made of FLOR1, VSP1 and AGAMOUS (AG). Binds directly with FLR1. In terms of tissue distribution, detected early in the floral meristem but mostly expressed in stamen and carpel primordia.

It is found in the nucleus. Functionally, probable transcription factor involved in the control of organ identity during the early development of flowers. Is required for normal development of stamens and carpels in the wild-type flower. Plays a role in maintaining the determinacy of the floral meristem. Acts as C class cadastral protein by repressing the A class floral homeotic genes like APETALA1. Forms a heterodimer via the K-box domain with either SEPALATTA1/AGL2, SEPALATTA2/AGL4, SEPALLATA3/AGL9 or AGL6 that could be involved in genes regulation during floral meristem development. Controls AHL21/GIK, a multifunctional chromatin modifier in reproductive organ patterning and differentiation. Induces microsporogenesis through the activation of SPL/NZZ. The chain is Floral homeotic protein AGAMOUS (AG) from Arabidopsis thaliana (Mouse-ear cress).